Reading from the N-terminus, the 424-residue chain is Gamma-glutamyl phosphate reductase (424 aa).

This sequence belongs to the gamma-glutamyl phosphate reductase family.

Its subcellular location is the cytoplasm. It carries out the reaction L-glutamate 5-semialdehyde + phosphate + NADP(+) = L-glutamyl 5-phosphate + NADPH + H(+). Its pathway is amino-acid biosynthesis; L-proline biosynthesis; L-glutamate 5-semialdehyde from L-glutamate: step 2/2. Its function is as follows. Catalyzes the NADPH-dependent reduction of L-glutamate 5-phosphate into L-glutamate 5-semialdehyde and phosphate. The product spontaneously undergoes cyclization to form 1-pyrroline-5-carboxylate. In Parvibaculum lavamentivorans (strain DS-1 / DSM 13023 / NCIMB 13966), this protein is Gamma-glutamyl phosphate reductase.